Here is a 185-residue protein sequence, read N- to C-terminus: Ribosome-recycling factor (185 aa).

The protein belongs to the RRF family.

The protein localises to the cytoplasm. Functionally, responsible for the release of ribosomes from messenger RNA at the termination of protein biosynthesis. May increase the efficiency of translation by recycling ribosomes from one round of translation to another. In Alcanivorax borkumensis (strain ATCC 700651 / DSM 11573 / NCIMB 13689 / SK2), this protein is Ribosome-recycling factor.